Reading from the N-terminus, the 384-residue chain is Isoafricanol synthase (384 aa).

The Mg(2+) site is built by Asp95, Asn245, Ser249, and Glu253.

This sequence belongs to the terpene synthase family. The cofactor is Mg(2+).

It carries out the reaction (2E,6E)-farnesyl diphosphate + H2O = (+)-isoafricanol + diphosphate. Functionally, catalyzes the cyclization of farnesyl diphosphate (FPP) to isoafricanol. The protein is Isoafricanol synthase of Streptomyces violaceusniger (strain Tu 4113).